The primary structure comprises 273 residues: Ribosomal RNA small subunit methyltransferase A (273 aa).

S-adenosyl-L-methionine contacts are provided by Asn-18, Leu-20, Gly-45, Glu-66, Asp-91, and Asn-113.

The protein belongs to the class I-like SAM-binding methyltransferase superfamily. rRNA adenine N(6)-methyltransferase family. RsmA subfamily.

It localises to the cytoplasm. It catalyses the reaction adenosine(1518)/adenosine(1519) in 16S rRNA + 4 S-adenosyl-L-methionine = N(6)-dimethyladenosine(1518)/N(6)-dimethyladenosine(1519) in 16S rRNA + 4 S-adenosyl-L-homocysteine + 4 H(+). In terms of biological role, specifically dimethylates two adjacent adenosines (A1518 and A1519) in the loop of a conserved hairpin near the 3'-end of 16S rRNA in the 30S particle. May play a critical role in biogenesis of 30S subunits. The sequence is that of Ribosomal RNA small subunit methyltransferase A from Escherichia coli O17:K52:H18 (strain UMN026 / ExPEC).